The primary structure comprises 121 residues: Large ribosomal subunit protein bL19 (121 aa).

It belongs to the bacterial ribosomal protein bL19 family.

This protein is located at the 30S-50S ribosomal subunit interface and may play a role in the structure and function of the aminoacyl-tRNA binding site. The polypeptide is Large ribosomal subunit protein bL19 (Porphyromonas gingivalis (strain ATCC BAA-308 / W83)).